A 307-amino-acid chain; its full sequence is Metapyrocatechase (307 aa).

VOC domains follow at residues 7–122 and 150–269; these read RPGH…LYAD and RFDH…VFCG. Fe cation contacts are provided by H153, H214, and E265.

Belongs to the extradiol ring-cleavage dioxygenase family. Homotetramer. Requires Fe(2+) as cofactor.

It catalyses the reaction catechol + O2 = (2Z,4E)-2-hydroxy-6-oxohexa-2,4-dienoate + H(+). It participates in xenobiotic degradation; toluene degradation. This chain is Metapyrocatechase (xylE), found in Pseudomonas putida (Arthrobacter siderocapsulatus).